A 219-amino-acid polypeptide reads, in one-letter code: Proteasome subunit beta type-9 (219 aa).

Residues 1–20 constitute a propeptide, removed in mature form; it reads MLQAGAPTAGSFRTGEVHTG. T21 functions as the Nucleophile in the catalytic mechanism. N6-acetyllysine occurs at positions 53 and 109.

This sequence belongs to the peptidase T1B family. As to quaternary structure, the 26S proteasome consists of a 20S proteasome core and two 19S regulatory subunits. The 20S proteasome core is composed of 28 subunits that are arranged in four stacked rings, resulting in a barrel-shaped structure. The two end rings are each formed by seven alpha subunits, and the two central rings are each formed by seven beta subunits. The catalytic chamber with the active sites is on the inside of the barrel. Component of the immunoproteasome, where it displaces the equivalent housekeeping subunit PSMB6. Component of the spermatoproteasome, a form of the proteasome specifically found in testis. Interacts with NCOA2 and NCOA3. Autocleaved. The resulting N-terminal Thr residue of the mature subunit is responsible for the nucleophile proteolytic activity. As to expression, detected in the cytoplasmic lobe of elongated spermatids, in residual bodies, and in the acrosomal cap of round spermatids.

The protein localises to the cytoplasm. The protein resides in the nucleus. It carries out the reaction Cleavage of peptide bonds with very broad specificity.. In terms of biological role, the proteasome is a multicatalytic proteinase complex which is characterized by its ability to cleave peptides with Arg, Phe, Tyr, Leu, and Glu adjacent to the leaving group at neutral or slightly basic pH. The proteasome has an ATP-dependent proteolytic activity. This subunit is involved in antigen processing to generate class I binding peptides. This Rattus norvegicus (Rat) protein is Proteasome subunit beta type-9 (Psmb9).